The chain runs to 305 residues: Syntaxin-112 (305 aa).

Position 1 is an N-acetylmethionine (methionine 1). Positions 52 to 119 form a coiled coil; sequence QEIETIKTLI…TLIETLEKRN (68 aa). The 63-residue stretch at 210–272 folds into the t-SNARE coiled-coil homology domain; it reads DLKTKERHEA…SGGTNSLYYA (63 aa).

This sequence belongs to the syntaxin family. In terms of assembly, part of the t-SNARE complex.

Functionally, vesicle trafficking protein that functions in the secretory pathway. This is Syntaxin-112 (SYP112) from Arabidopsis thaliana (Mouse-ear cress).